Consider the following 264-residue polypeptide: Thymidylate synthase (264 aa).

Residue arginine 21 coordinates dUMP. Histidine 51 is a binding site for (6R)-5,10-methylene-5,6,7,8-tetrahydrofolate. DUMP is bound at residue 126–127 (RR). The active-site Nucleophile is cysteine 146. Residues 166 to 169 (RSCD), asparagine 177, and 207 to 209 (HLY) contribute to the dUMP site. Aspartate 169 provides a ligand contact to (6R)-5,10-methylene-5,6,7,8-tetrahydrofolate. A (6R)-5,10-methylene-5,6,7,8-tetrahydrofolate-binding site is contributed by alanine 263.

The protein belongs to the thymidylate synthase family. Bacterial-type ThyA subfamily. Homodimer.

Its subcellular location is the cytoplasm. It carries out the reaction dUMP + (6R)-5,10-methylene-5,6,7,8-tetrahydrofolate = 7,8-dihydrofolate + dTMP. It functions in the pathway pyrimidine metabolism; dTTP biosynthesis. In terms of biological role, catalyzes the reductive methylation of 2'-deoxyuridine-5'-monophosphate (dUMP) to 2'-deoxythymidine-5'-monophosphate (dTMP) while utilizing 5,10-methylenetetrahydrofolate (mTHF) as the methyl donor and reductant in the reaction, yielding dihydrofolate (DHF) as a by-product. This enzymatic reaction provides an intracellular de novo source of dTMP, an essential precursor for DNA biosynthesis. The sequence is that of Thymidylate synthase from Shigella boydii serotype 4 (strain Sb227).